A 223-amino-acid chain; its full sequence is Regulator of G-protein signaling 19 (223 aa).

Residues 1 to 30 are disordered; the sequence is MPTPPEAEKQQTGPEEADQPPSMSSHDAAP. The span at 20 to 29 shows a compositional bias: low complexity; sequence PPSMSSHDAA. Phosphoserine is present on residues S24 and S103. Positions 96-212 constitute an RGS domain; the sequence is SFDKLMHSPA…LSSPAYRALL (117 aa). S157 is subject to Phosphoserine; by MAPK1 and MAPK3. Residues 213 to 223 form an interaction with GIPC region; that stretch reads LQGASQSSSEA.

As to quaternary structure, interacts with GIPC PDZ domain. Interacts with GNAO1. Post-translationally, fatty acylated. Heavily palmitoylated in the cysteine string motif. Phosphorylated, mainly on serine residues.

The protein resides in the membrane. Its function is as follows. Inhibits signal transduction by increasing the GTPase activity of G protein alpha subunits thereby driving them into their inactive GDP-bound form. Binds to G-alpha subfamily 1 members, with the order G(i)a3 &gt; G(i)a1 &gt; G(o)a &gt;&gt; G(z)a/G(i)a2. Activity on G(z)-alpha is inhibited by phosphorylation and palmitoylation of the G-protein. The chain is Regulator of G-protein signaling 19 (RGS19) from Bos taurus (Bovine).